Reading from the N-terminus, the 372-residue chain is Phospho-N-acetylmuramoyl-pentapeptide-transferase (372 aa).

Transmembrane regions (helical) follow at residues 25–45 (RSLL…PVMI), 73–93 (TMGG…WADL), 98–118 (VWIV…DDWI), 134–154 (FFWT…IAQN), 176–196 (SIPL…YLVI), 211–231 (GLAI…AYLA), 251–271 (LVVI…YNAH), 275–295 (IFMG…IAVM), 300–320 (IVFA…FLQI), and 349–369 (QVVT…LMTL).

The protein belongs to the glycosyltransferase 4 family. MraY subfamily. Requires Mg(2+) as cofactor.

The protein localises to the cell inner membrane. It carries out the reaction UDP-N-acetyl-alpha-D-muramoyl-L-alanyl-gamma-D-glutamyl-meso-2,6-diaminopimeloyl-D-alanyl-D-alanine + di-trans,octa-cis-undecaprenyl phosphate = di-trans,octa-cis-undecaprenyl diphospho-N-acetyl-alpha-D-muramoyl-L-alanyl-D-glutamyl-meso-2,6-diaminopimeloyl-D-alanyl-D-alanine + UMP. Its pathway is cell wall biogenesis; peptidoglycan biosynthesis. Catalyzes the initial step of the lipid cycle reactions in the biosynthesis of the cell wall peptidoglycan: transfers peptidoglycan precursor phospho-MurNAc-pentapeptide from UDP-MurNAc-pentapeptide onto the lipid carrier undecaprenyl phosphate, yielding undecaprenyl-pyrophosphoryl-MurNAc-pentapeptide, known as lipid I. The sequence is that of Phospho-N-acetylmuramoyl-pentapeptide-transferase from Acinetobacter baylyi (strain ATCC 33305 / BD413 / ADP1).